Reading from the N-terminus, the 314-residue chain is Mitochondrial translation factor 2 (314 aa).

The disordered stretch occupies residues 111 to 136 (ENSSNIYDPSSPPDSPRKQQTHLGTI).

In terms of assembly, component of the MRH5C complex, composed of mrh5, ppr4, mtf2, and sls1. Proteins mtf2 and sls1 form a subcomplex that serves as a scaffold to bring mrh5 and ppr4 together. The MRH5C complex associates with the small subunit of the mitochondrial ribosome.

Its function is as follows. Translation activation factor that as part of the MRH5C complex specifically recruits cox1 mRNA to the mitochondrial ribosome for translation initiation. The chain is Mitochondrial translation factor 2 from Schizosaccharomyces pombe (strain 972 / ATCC 24843) (Fission yeast).